The primary structure comprises 435 residues: D-amino acid dehydrogenase (435 aa).

An FAD-binding site is contributed by 3-17; it reads VIVLGGGVLGVSTAW.

It belongs to the DadA oxidoreductase family. It depends on FAD as a cofactor.

The catalysed reaction is a D-alpha-amino acid + A + H2O = a 2-oxocarboxylate + AH2 + NH4(+). It participates in amino-acid degradation; D-alanine degradation; NH(3) and pyruvate from D-alanine: step 1/1. Oxidative deamination of D-amino acids. The chain is D-amino acid dehydrogenase from Chromobacterium violaceum (strain ATCC 12472 / DSM 30191 / JCM 1249 / CCUG 213 / NBRC 12614 / NCIMB 9131 / NCTC 9757 / MK).